A 444-amino-acid chain; its full sequence is UPF0053 protein YhdP (444 aa).

The region spanning 1-201 (MDIVNLILVA…YKSGEINQSE (201 aa)) is the CNNM transmembrane domain. A run of 3 helical transmembrane segments spans residues 7 to 27 (ILVA…FAII), 61 to 81 (ACQL…ESTI), and 101 to 121 (VISF…VGEL). 2 consecutive CBS domains span residues 220 to 282 (MIPR…SVDS) and 284 to 344 (ISQF…IRDE).

This sequence belongs to the UPF0053 family.

The protein resides in the cell membrane. This Bacillus subtilis (strain 168) protein is UPF0053 protein YhdP (yhdP).